The chain runs to 110 residues: Endoribonuclease SymE (110 aa).

Residues 29 to 74 (SRYPDYTRIPALTMKGQWLEAAGFATGTEVDVRVMNGCIVLTAQQP) enclose the SpoVT-AbrB domain.

This sequence belongs to the SymE family.

It localises to the cytoplasm. In terms of biological role, involved in the degradation and recycling of damaged RNA. It is itself a target for degradation by the ATP-dependent protease Lon. The polypeptide is Endoribonuclease SymE (Salmonella typhi).